The sequence spans 464 residues: ATP synthase subunit beta 2 (464 aa).

153 to 160 lines the ATP pocket; sequence GGAGVGKT.

The protein belongs to the ATPase alpha/beta chains family. F-type ATPases have 2 components, CF(1) - the catalytic core - and CF(0) - the membrane proton channel. CF(1) has five subunits: alpha(3), beta(3), gamma(1), delta(1), epsilon(1). CF(0) has three main subunits: a(1), b(2) and c(9-12). The alpha and beta chains form an alternating ring which encloses part of the gamma chain. CF(1) is attached to CF(0) by a central stalk formed by the gamma and epsilon chains, while a peripheral stalk is formed by the delta and b chains.

It is found in the cell inner membrane. The enzyme catalyses ATP + H2O + 4 H(+)(in) = ADP + phosphate + 5 H(+)(out). Produces ATP from ADP in the presence of a proton gradient across the membrane. The catalytic sites are hosted primarily by the beta subunits. The protein is ATP synthase subunit beta 2 of Paraburkholderia xenovorans (strain LB400).